Reading from the N-terminus, the 379-residue chain is Cobalt-precorrin-5B C(1)-methyltransferase (379 aa).

The protein belongs to the CbiD family.

It catalyses the reaction Co-precorrin-5B + S-adenosyl-L-methionine = Co-precorrin-6A + S-adenosyl-L-homocysteine. Its pathway is cofactor biosynthesis; adenosylcobalamin biosynthesis; cob(II)yrinate a,c-diamide from sirohydrochlorin (anaerobic route): step 6/10. In terms of biological role, catalyzes the methylation of C-1 in cobalt-precorrin-5B to form cobalt-precorrin-6A. In Salmonella dublin (strain CT_02021853), this protein is Cobalt-precorrin-5B C(1)-methyltransferase.